Consider the following 149-residue polypeptide: MNVFLSKYVNGVDKKSRVSVPANYRAVLGQELFNGVIAYPSIRNKCIEACGISHIEKLRQMIETLDPYSEERDAFETIIFGEALQLSFDSEGRVMLPQSLMQHAGIEEQACFVGKGVIFEIWQPQNFEKYLNSAQKIAYEKRLTLRNAN.

SpoVT-AbrB domains are found at residues 7–54 and 83–126; these read KYVN…GISH and ALQL…QPQN.

Belongs to the MraZ family. Forms oligomers.

It is found in the cytoplasm. The protein localises to the nucleoid. The protein is Transcriptional regulator MraZ of Rickettsia canadensis (strain McKiel).